Consider the following 329-residue polypeptide: Malate dehydrogenase (329 aa).

NAD(+) is bound at residue 11-17 (GAAGQIG). 2 residues coordinate substrate: arginine 92 and arginine 98. NAD(+)-binding positions include asparagine 105, glutamine 112, and 129 to 131 (VGN). Asparagine 131 and arginine 165 together coordinate substrate. The Proton acceptor role is filled by histidine 190.

This sequence belongs to the LDH/MDH superfamily. MDH type 2 family.

The catalysed reaction is (S)-malate + NAD(+) = oxaloacetate + NADH + H(+). Catalyzes the reversible oxidation of malate to oxaloacetate. In Laribacter hongkongensis (strain HLHK9), this protein is Malate dehydrogenase.